Consider the following 331-residue polypeptide: Cytosolic arginine sensor for mTORC1 subunit 1 (331 aa).

Ser-14 is modified (phosphoserine). The ACT 1 domain occupies 72–139 (AEATWLVMNV…SVVIHTLARE (68 aa)). 110 to 111 (SV) is an L-arginine binding site. The disordered stretch occupies residues 155–174 (GDDSSNGFPQAQHGPSPTVH). Over residues 156 to 174 (DDSSNGFPQAQHGPSPTVH) the composition is skewed to polar residues. The 61-residue stretch at 262-322 (WRMVRIGGQP…SCVIDILQRR (61 aa)) folds into the ACT 2 domain. L-arginine contacts are provided by residues Gly-273, 279 to 280 (IV), and 299 to 303 (TFNFD).

This sequence belongs to the GATS family. As to quaternary structure, forms homodimers and heterodimers with CASTOR2. Interacts with the GATOR2 complex which is composed of MIOS, SEC13, SEH1L, WDR24 and WDR59; the interaction is negatively regulated by arginine. Interacts with TM4SF5; the interaction is positively regulated by leucine and is negatively regulated by arginine. Phosphorylation at Ser-14 by AKT1, promoting the interaction between CASTOR1 and RNF167. In terms of processing, ubiquitinated by RNF167 via 'Lys-29'-polyubiquitination, leading to its degradation, releasing the GATOR2 complex. Ubiquitination by RNF167 is promoted by phosphorylation at Ser-14 by AKT1.

It is found in the cytoplasm. The protein localises to the cytosol. Its function is as follows. Functions as an intracellular arginine sensor within the amino acid-sensing branch of the TORC1 signaling pathway. As a homodimer or a heterodimer with CASTOR2, binds and inhibits the GATOR subcomplex GATOR2 and thereby mTORC1. Binding of arginine to CASTOR1 allosterically disrupts the interaction of CASTOR1-containing dimers with GATOR2 which can in turn activate mTORC1 and the TORC1 signaling pathway. This is Cytosolic arginine sensor for mTORC1 subunit 1 from Rattus norvegicus (Rat).